The primary structure comprises 465 residues: Monogalactosyldiacylglycerol synthase 3, chloroplastic (465 aa).

UDP is bound by residues H86, R255, 365–369, and E387; that span reads GTIAE.

This sequence belongs to the glycosyltransferase 28 family. Expressed mainly in roots. Detected in flowers, leaves, stems, siliques and pollen tubes.

It is found in the plastid. The protein localises to the chloroplast outer membrane. The catalysed reaction is a 1,2-diacyl-sn-glycerol + UDP-alpha-D-galactose = a 1,2-diacyl-3-O-(beta-D-galactosyl)-sn-glycerol + UDP + H(+). The enzyme catalyses 1,2-di-(9Z,12Z-octadecadienoyl)-sn-glycerol + UDP-alpha-D-galactose = 1,2-di-(9Z,12Z-octadecadienoyl)-3-beta-D-galactosyl-sn-glycerol + UDP + H(+). It carries out the reaction 1-(9Z-octadecenoyl)-2-hexadecanoyl-sn-glycerol + UDP-alpha-D-galactose = 1-(9Z-octadecenoyl)-2-hexadecanoyl-3-beta-D-galactosyl-sn-glycerol + UDP + H(+). It catalyses the reaction 1,2-di-(9Z-octadecenoyl)-sn-glycerol + UDP-alpha-D-galactose = 1,2-di-(9Z-octadecenoyl)-3-beta-D-galactosyl-sn-glycerol + UDP + H(+). With respect to regulation, inhibited by galvestine-1. In terms of biological role, involved in the synthesis of monogalactosyldiacylglycerol, the major structural component of photosynthetic membranes and in the chloroplast envelope biogenesis. Can use both prokaryotic (18:1/16:0) or eukaryotic (18:2/18:2) 1,2-diacylglycerol species, but operates with some preference for the eukaryotic one. Plays a minor role in galactolipid synthesis in chloroplasts. Is essential for membrane lipid remodeling in phosphate-starved roots. Acts as the major factor involved in digalactosyldiacylglycerol (DGDG) biosynthesis in phosphate-starved roots. Does not seem to be required for plant growth under nutrient-sufficient conditions. Required for membrane lipid remodeling in plants grown in acidic conditions. This is Monogalactosyldiacylglycerol synthase 3, chloroplastic from Arabidopsis thaliana (Mouse-ear cress).